Reading from the N-terminus, the 574-residue chain is Septation ring formation regulator EzrA (574 aa).

The Extracellular portion of the chain corresponds to 1–7; the sequence is MSSGLIL. Residues 8-26 traverse the membrane as a helical segment; sequence LIVAIVLLVIIAYLVGVII. Residues 27–574 lie on the Cytoplasmic side of the membrane; sequence RKRNDTLITS…YEKTRERIRF (548 aa). 4 coiled-coil regions span residues 102–131, 161–190, 276–379, and 459–493; these read NFIR…REAL, ENED…FVAL, VTLD…QQEK, and QLEA…NLEE.

It belongs to the EzrA family.

Its subcellular location is the cell membrane. In terms of biological role, negative regulator of FtsZ ring formation; modulates the frequency and position of FtsZ ring formation. Inhibits FtsZ ring formation at polar sites. Interacts either with FtsZ or with one of its binding partners to promote depolymerization. The sequence is that of Septation ring formation regulator EzrA from Streptococcus equi subsp. zooepidemicus (strain MGCS10565).